Consider the following 250-residue polypeptide: MAAGTSSYWEDLRKQARQLENELDLKLVSFSKLCTSYSHSSTRDGRRDRYSSDTTPLLNGSSQDRMFETMAIEIEQLLARLTGVNDKMAEYTNSAGVPSLNAALMHTLQRHRDILQDYTHEFHKTKANFMAIRERENLMGSVRKDIESYKSGSGVNNRRTELFLKEHDHLRNSDRLIEETISIAMATKENMTSQRGMLKSIHSKMNTLANRFPAVNSLIQRINLRKRRDSLILGGVIGICTILLLLYAFH.

Residue Ala-2 is modified to N-acetylalanine. Over 2-229 (AAGTSSYWED…QRINLRKRRD (228 aa)) the chain is Cytoplasmic. Residues 9–30 (WEDLRKQARQLENELDLKLVSF) are a coiled coil. A disordered region spans residues 38 to 59 (SHSSTRDGRRDRYSSDTTPLLN). A compositionally biased stretch (basic and acidic residues) spans 41 to 51 (STRDGRRDRYS). The stretch at 68 to 95 (ETMAIEIEQLLARLTGVNDKMAEYTNSA) forms a coiled coil. Ser-141 carries the phosphoserine modification. Residues 230–250 (SLILGGVIGICTILLLLYAFH) traverse the membrane as a helical; Anchor for type IV membrane protein segment.

Belongs to the GOSR1 family. Component of several multiprotein Golgi SNARE complexes. Identified in a SNARE complex with BET1, STX5 and YKT6, in a SNARE complex with BET1L, STX5 and YKT6, in a SNARE complex with STX5, GOSR2, SEC22B and BET1, and in complex with STX5 and COG3. Interacts with GABARAPL2.

It is found in the golgi apparatus membrane. Its function is as follows. Involved in transport from the ER to the Golgi apparatus as well as in intra-Golgi transport. It belongs to a super-family of proteins called t-SNAREs or soluble NSF (N-ethylmaleimide-sensitive factor) attachment protein receptor. May play a protective role against hydrogen peroxide induced cytotoxicity under glutathione depleted conditions in neuronal cells by regulating the intracellular ROS levels via inhibition of p38 MAPK (MAPK11, MAPK12, MAPK13 and MAPK14). Participates in docking and fusion stage of ER to cis-Golgi transport. Plays an important physiological role in VLDL-transport vesicle-Golgi fusion and thus in VLDL delivery to the hepatic cis-Golgi. In Homo sapiens (Human), this protein is Golgi SNAP receptor complex member 1 (GOSR1).